The sequence spans 125 residues: Large ribosomal subunit protein uL22c (125 aa).

It belongs to the universal ribosomal protein uL22 family. In terms of assembly, part of the 50S ribosomal subunit.

Its subcellular location is the plastid. The protein resides in the chloroplast. Its function is as follows. This protein binds specifically to 23S rRNA. The globular domain of the protein is located near the polypeptide exit tunnel on the outside of the subunit, while an extended beta-hairpin is found that lines the wall of the exit tunnel in the center of the 70S ribosome. This chain is Large ribosomal subunit protein uL22c (rpl22), found in Nymphaea alba (White water-lily).